Here is a 213-residue protein sequence, read N- to C-terminus: MTDKSHQCVIIGIAGASASGKSLIASTLYRELRDQVGDEHIGVIPEDSYYKDQSHLSMEERVKTNYDHPNAMDHSLLFQHLQMIKNGTPIDLPVYSYVDHTRTQDTIHIEPKKVIILEGILLLTDARLREAMNFSIFVDTPLDICLMRRIKRDVNERGRSMDSVMAQYQKTVRPMFLQFIEPSKQYADIIVPRGGKNRIAIDILKAKISQFFE.

15 to 22 (GASASGKS) contacts ATP.

The protein belongs to the uridine kinase family.

Its subcellular location is the cytoplasm. It catalyses the reaction uridine + ATP = UMP + ADP + H(+). It carries out the reaction cytidine + ATP = CMP + ADP + H(+). Its pathway is pyrimidine metabolism; CTP biosynthesis via salvage pathway; CTP from cytidine: step 1/3. The protein operates within pyrimidine metabolism; UMP biosynthesis via salvage pathway; UMP from uridine: step 1/1. The sequence is that of Uridine kinase from Enterobacter sp. (strain 638).